A 539-amino-acid chain; its full sequence is Propionyl-CoA carboxylase beta chain, mitochondrial (539 aa).

The transit peptide at 1–28 directs the protein to the mitochondrion; the sequence is MAAAVRVTAARARLRVVVRSLHAGVRSL. In terms of domain architecture, CoA carboxyltransferase N-terminal spans 32–290; that stretch reads PVSVNERIEN…SNQDPAPIRE (259 aa). Residues 32–533 form a carboxyltransferase region; that stretch reads PVSVNERIEN…SKKVQRPWRK (502 aa). Ser71 carries the phosphoserine modification. Lys99 carries the N6-acetyllysine; alternate modification. An N6-succinyllysine; alternate modification is found at Lys99. Residues 294–533 enclose the CoA carboxyltransferase C-terminal domain; sequence PSDRLVPELD…SKKVQRPWRK (240 aa). The segment at 325–358 is acyl-CoA binding; sequence DERDFFEIMPNYAKNIIVGFARMNGRTVGIVGNQ. N6-acetyllysine; alternate occurs at positions 474 and 489. 2 positions are modified to N6-succinyllysine; alternate: Lys474 and Lys489.

This sequence belongs to the AccD/PCCB family. In terms of assembly, the holoenzyme is a dodecamer composed of 6 PCCA/alpha subunits and 6 PCCB/beta subunits.

Its subcellular location is the mitochondrion matrix. The catalysed reaction is propanoyl-CoA + hydrogencarbonate + ATP = (S)-methylmalonyl-CoA + ADP + phosphate + H(+). It catalyses the reaction butanoyl-CoA + hydrogencarbonate + ATP = (2S)-ethylmalonyl-CoA + ADP + phosphate + H(+). It functions in the pathway metabolic intermediate metabolism; propanoyl-CoA degradation; succinyl-CoA from propanoyl-CoA: step 1/3. In terms of biological role, this is one of the 2 subunits of the biotin-dependent propionyl-CoA carboxylase (PCC), a mitochondrial enzyme involved in the catabolism of odd chain fatty acids, branched-chain amino acids isoleucine, threonine, methionine, and valine and other metabolites. Propionyl-CoA carboxylase catalyzes the carboxylation of propionyl-CoA/propanoyl-CoA to D-methylmalonyl-CoA/(S)-methylmalonyl-CoA. Within the holoenzyme, the alpha subunit catalyzes the ATP-dependent carboxylation of the biotin carried by the biotin carboxyl carrier (BCC) domain, while the beta subunit then transfers the carboxyl group from carboxylated biotin to propionyl-CoA. Propionyl-CoA carboxylase also significantly acts on butyryl-CoA/butanoyl-CoA, which is converted to ethylmalonyl-CoA/(2S)-ethylmalonyl-CoA at a much lower rate. Other alternative minor substrates include (2E)-butenoyl-CoA/crotonoyl-CoA. In Sus scrofa (Pig), this protein is Propionyl-CoA carboxylase beta chain, mitochondrial.